A 1846-amino-acid polypeptide reads, in one-letter code: MYEGKKTKNMFLTRALEKILADKEVKKAHHSQLRKACEVALEEIKVETEKQSPPHGEAKAGSGTLPPVKSKTNFIEADKYFLPFELACQSKCPRIVSTSLDCLQKLIAYGHLTGRAPDSTTPGKKLIDRIIETICGCFQGPQTDEGVQLQIIKALLTAVTSQHIEIHEGTVLQAVRTCYNIYLASKNLINQTTAKATLTQMLNVIFARMENQALQEAKQMERERHRQQQHLLQSPVSHHEPESPHLRYLPPQTVDHINQEHEGDLEPQTHDVDKSLQDDTEPENGSDISSAENEQTEADQATAAETLSKNDILYDGDYEEKPLDIVQSIVEEMVNIIVGDMGEGMAISASTEGNTGTVEDGSDSENIQANGIPGTPISVAYTPSLPDDRLSVSSNDTQESGNSSGPSPGAKFSHILQKDAFLVFRSLCKLSMKPLSDGPPDPKSHELRSKILSLQLLLSILQNAGPVFRTNEMFINAIKQYLCVALSKNGVSSVPEVFELSLSIFLTLLSNFKTHLKMQIEVFFKEIFLYILETSTSSFDHKWMVIQTLTRICADAQSVVDIYVNYDCDLNAANIFERLVNDLSKIAQGRGSQELGMSNVQELSLRKKGLECLVSILKCMVEWSKDQYVNPNSQTTLGQEKPSEQEISEVKHPETINRYGSLNSLESTSSSGIGSYSTQMSGTDNPEQFEVLKQQKEIIEQGIDLFNKKPKRGIQYLQEQGMLGTTPEDIAQFLHQEERLDSTQVGEFLGDNDKFNKEVMYAYVDQHDFSGKDFVSALRLFLEGFRLPGEAQKIDRLMEKFAARYLECNQGQTLFASADTAYVLAYSIIMLTTDLHSPQVKNKMTKEQYIKMNRGINDSKDLPEEYLSAIYNEIAGKKISMKETKELTIPTKSTKQNVASEKQRRLLYNLEMEQMAKTAKALMEAVSHVQAPFTSATHLEHVRPMFKLAWTPFLAAFSVGLQDCDDTEVASLCLEGIRCAIRIACIFSIQLERDAYVQALARFTLLTVSSGITEMKQKNIDTIKTLITVAHTDGNYLGNSWHEILKCISQLELAQLIGTGVKPRYISGTVRGREGSLTGTKDQAPDEFVGLGLVGGNVDWKQIASIQESIGETSSQSVVVAVDRIFTGSTRLDGNAIVDFVRWLCAVSMDELLSTTHPRMFSLQKIVEISYYNMGRIRLQWSRIWEVIGDHFNKVGCNPNEDVAIFAVDSLRQLSMKFLEKGELANFRFQKDFLRPFEHIMKRNRSPTIRDMVVRCIAQMVNSQAANIRSGWKNIFSVFHLAASDQDESIVELAFQTTGHIVTLVFEKHFPATIDSFQDAVKCLSEFACNAAFPDTSMEAIRLIRHCAKYVSDRPQAFKEYTSDDMSVAPEDRVWVRGWFPILFELSCIINRCKLDVRTRGLTVMFEIMKTYGHTYEKHWWQDLFRIVFRIFDNMKLPEQQTEKAEWMTTTCNHALYAICDVFTQYLEVLSDVLLDDIFAQLYWCVQQDNEQLARSGTNCLENVVILNGEKFTLEIWDKTCNCTLDIFKTTIPHALLTWRPTSGEAEPPSPSAVSEKPLDAISQKSVDIHDSIQPRSSDNRQQAPLVSVSTVSEEVSKVKSTAKFPEQKLFAALLIKCVVQLELIQTIDNIVFFPATSKKEDAENLAAAQRDAVDFDVRVDTQDQGMYRFLTSQQLFKLLDCLLESHRFAKAFNSNNEQRTALWKAGFKGKSKPNLLKQETSSLACGLRILFRMYMDESRVSAWEEVQQRLLNVCREALSYFLTLTSESHREAWTNLLLLFLTKVLKISDSRFKAHASFYYPLLCEIMQFDLIPELRAVLRRFFLRIGIVFQISQPPEQELGINRQ.

The tract at residues 2 to 224 (YEGKKTKNMF…QEAKQMERER (223 aa)) is DCB; DCB:DCB domain and DCB:HUS domain interaction. A Phosphoserine modification is found at serine 52. Disordered regions lie at residues 216 to 249 (EAKQMERERHRQQQHLLQSPVSHHEPESPHLRYL), 264 to 304 (DLEP…ATAA), and 347 to 410 (ISAS…SPGA). Basic and acidic residues predominate over residues 264–277 (DLEPQTHDVDKSLQ). 3 positions are modified to phosphoserine: serine 286, serine 289, and serine 290. Polar residues-rich tracts occupy residues 348–357 (SASTEGNTGT) and 391–406 (SVSSNDTQESGNSSGP). Serine 394 and serine 407 each carry phosphoserine. The HUS; DCB:HUS domain interaction stretch occupies residues 554–574 (ADAQSVVDIYVNYDCDLNAAN). The interval 631-684 (PNSQTTLGQEKPSEQEISEVKHPETINRYGSLNSLESTSSSGIGSYSTQMSGTD) is disordered. The span at 641–655 (KPSEQEISEVKHPET) shows a compositional bias: basic and acidic residues. Residues 661–681 (SLNSLESTSSSGIGSYSTQMS) are compositionally biased toward low complexity. The 190-residue stretch at 688–877 (QFEVLKQQKE…SAIYNEIAGK (190 aa)) folds into the SEC7 domain. Positions 708–712 (KKPKR) match the Nuclear localization signal (NLS) motif. 3 positions are modified to phosphoserine: serine 1076, serine 1563, and serine 1566.

In terms of assembly, homodimer. Interacts with ARFGEF2/BIG2; both proteins are probably part of the same or very similar macromolecular complexes. Interacts with FKBP2. Interacts with MYO9B. Interacts with PRKAR1A and PRKAR2A. Interacts with PPP1CC. Interacts with NCL, FBL, NUP62 and U3 small nucleolar RNA. Interacts with DPY30. Interacts with PDE3A. Interacts with KANK1. Interacts with TBC1D22A and TBC1D22B. Phosphorylated. In vitro phosphorylated by PKA reducing its GEF activity and dephosphorylated by phosphatase PP1.

Its subcellular location is the cytoplasm. It is found in the perinuclear region. It localises to the golgi apparatus. The protein resides in the trans-Golgi network. The protein localises to the nucleus. Its subcellular location is the nucleolus. It is found in the nucleus matrix. It localises to the membrane. Its activity is regulated as follows. Inhibited by brefeldin A. Its function is as follows. Promotes guanine-nucleotide exchange on ARF1 and ARF3. Promotes the activation of ARF1/ARF3 through replacement of GDP with GTP. Involved in vesicular trafficking. Required for the maintenance of Golgi structure; the function may be independent of its GEF activity. Required for the maturation of integrin beta-1 in the Golgi. Involved in the establishment and persistence of cell polarity during directed cell movement in wound healing. Proposed to act as A kinase-anchoring protein (AKAP) and may mediate crosstalk between Arf and PKA pathways. Inhibits GAP activity of MYO9B probably through competitive RhoA binding. The function in the nucleus remains to be determined. In Mus musculus (Mouse), this protein is Brefeldin A-inhibited guanine nucleotide-exchange protein 1 (Arfgef1).